The chain runs to 331 residues: PDZ and LIM domain protein 4 (331 aa).

The PDZ domain occupies 1-84 (MPHSVTLRGP…HLTLSVSRPE (84 aa)). 3 disordered regions span residues 80-99 (VSRP…KAQA), 105-152 (DSEA…GSNS), and 221-243 (AGEG…ASKL). Phosphoserine occurs at positions 112, 116, 120, and 135. An LIM zinc-binding domain is found at 254–313 (PECTRCGHGIVGTIVKARDKLYHPECFMCSDCGLNLKQRGYFFLDERLYCESHAKARVKP).

Homodimer. Interacts (via C-terminus only or via combined C-terminus and LIM domain, but not LIM domain only) with PTPN13 (via the second or fourth PDZ domains). Found in a complex with PTPN13 and TRIP6. Interacts (via PDZ domain) with ACTN1 and ACTN2 (via C-terminal SDL residues). Interacts (via PDZ domain) with TRIP6 (via the second LIM domain or via the third LIM domain plus C-terminus). Interacts (via LIM domain) with GRIA1 (via C-terminus); this interaction as well as the interaction with alpha-actinin is required for their colocalization in early endosomes. Interacts with PDLIM1. Forms (via LIM domain) a heterodimer with PDLIM3. Interacts directly with SRC (via kinase domain and to a lesser extent the SH2 domain). Post-translationally, phosphorylated on tyrosine residue(s). Can be dephosphorylated by PTPN13.

It is found in the cytoplasm. It localises to the cytoskeleton. The protein localises to the cell projection. Its subcellular location is the dendritic spine. The protein resides in the early endosome membrane. It is found in the recycling endosome membrane. It localises to the nucleus. The protein localises to the perinuclear region. Its subcellular location is the lamellipodium. The protein resides in the synapse. It is found in the synaptosome. Its function is as follows. Suppresses SRC activation by recognizing and binding to active SRC and facilitating PTPN13-mediated dephosphorylation of SRC 'Tyr-419' leading to its inactivation. Inactivated SRC dissociates from this protein allowing the initiation of a new SRC inactivation cycle. Involved in reorganization of the actin cytoskeleton. In nonmuscle cells, binds to ACTN1 (alpha-actinin-1), increases the affinity of ACTN1 to F-actin (filamentous actin), and promotes formation of actin stress fibers. Involved in regulation of the synaptic AMPA receptor transport in dendritic spines of hippocampal pyramidal neurons directing the receptors toward an insertion at the postsynaptic membrane. Links endosomal surface-internalized GRIA1-containing AMPA receptors to the alpha-actinin/actin cytoskeleton. Increases AMPA receptor-mediated excitatory postsynaptic currents in neurons. The protein is PDZ and LIM domain protein 4 (PDLIM4) of Bos taurus (Bovine).